Consider the following 193-residue polypeptide: tRNA(Phe) 7-((3-amino-3-carboxypropyl)-4-demethylwyosine(37)-N(4))-methyltransferase (193 aa).

It belongs to the TYW3 family.

It carries out the reaction 4-demethyl-7-[(3S)-3-amino-3-carboxypropyl]wyosine(37) in tRNA(Phe) + S-adenosyl-L-methionine = 7-[(3S)-3-amino-3-carboxypropyl]wyosine(37) in tRNA(Phe) + S-adenosyl-L-homocysteine + H(+). Functionally, S-adenosyl-L-methionine-dependent methyltransferase that acts as a component of the wyosine derivatives biosynthesis pathway. Probably methylates N-4 position of wybutosine-86 to produce wybutosine-72. The polypeptide is tRNA(Phe) 7-((3-amino-3-carboxypropyl)-4-demethylwyosine(37)-N(4))-methyltransferase (Methanocaldococcus jannaschii (strain ATCC 43067 / DSM 2661 / JAL-1 / JCM 10045 / NBRC 100440) (Methanococcus jannaschii)).